Here is a 465-residue protein sequence, read N- to C-terminus: Serine/threonine-protein kinase 38 (465 aa).

At Ala2 the chain carries N-acetylalanine. The segment at 62–87 (KRLRRSAHARKETEFLRLKRTRLGLE) is interaction with S100B. Thr74 carries the post-translational modification Phosphothreonine. Residues 89–382 (FESLKVIGRG…VEEIKSNSFF (294 aa)) form the Protein kinase domain. ATP-binding positions include 95–103 (IGRGAFGEV) and Lys118. Catalysis depends on Asp212, which acts as the Proton acceptor. At Ser264 the chain carries Phosphoserine. Ser281 is modified (phosphoserine; by autocatalysis). The UFM1-interacting motif (UFIM) motif lies at 306–311 (WSLGVI). An AGC-kinase C-terminal domain is found at 383–455 (EGVDWEHIRE…KRFEGLTARG (73 aa)). Position 444 is a phosphothreonine; by STK24/MST3 (Thr444).

This sequence belongs to the protein kinase superfamily. AGC Ser/Thr protein kinase family. As to quaternary structure, homodimeric S100B binds two molecules of STK38. Interacts with MOB1 and MOB2. Interacts with MAP3K1 and MAP3K2 (via the kinase catalytic domain). Forms a tripartite complex with MOBKL1B and STK3/MST2. Interacts with MICAL1; leading to inhibit the protein kinase activity by antagonizing activation by MST1/STK4. The cofactor is Mg(2+). Post-translationally, ISGylated. Phosphorylated by STK3/MST2 and this is enhanced by MOBKL1B. As to expression, ubiquitously expressed with highest levels observed in peripheral blood leukocytes.

Its subcellular location is the nucleus. The protein localises to the cytoplasm. It is found in the chromosome. The enzyme catalyses L-seryl-[protein] + ATP = O-phospho-L-seryl-[protein] + ADP + H(+). It catalyses the reaction L-threonyl-[protein] + ATP = O-phospho-L-threonyl-[protein] + ADP + H(+). Activated by binding of S100B which releases autoinhibitory N-lobe interactions, enabling ATP to bind and the autophosphorylation of Ser-281. Thr-444 then undergoes calcium-dependent phosphorylation by STK24/MST3. Interactions between phosphorylated Thr-444 and the N-lobe promote additional structural changes that complete the activation of the kinase. Autoinhibition is also released by the binding of MOB1/MOBKL1A and MOB2/HCCA2 to the N-terminal of STK38. In terms of biological role, serine/threonine-protein kinase that acts as a negative regulator of MAP3K1/2 signaling. Converts MAP3K2 from its phosphorylated form to its non-phosphorylated form and inhibits autophosphorylation of MAP3K2. Acts as an ufmylation 'reader' in a kinase-independent manner: specifically recognizes and binds mono-ufmylated histone H4 in response to DNA damage, promoting the recruitment of SUV39H1 to the double-strand breaks, resulting in ATM activation. The polypeptide is Serine/threonine-protein kinase 38 (Homo sapiens (Human)).